The following is a 415-amino-acid chain: Glutamyl-tRNA reductase (415 aa).

Residues threonine 49–arginine 52, serine 104, glutamate 109–glutamine 111, and glutamine 115 contribute to the substrate site. Cysteine 50 acts as the Nucleophile in catalysis. Glycine 184–isoleucine 189 lines the NADP(+) pocket.

This sequence belongs to the glutamyl-tRNA reductase family. Homodimer.

The catalysed reaction is (S)-4-amino-5-oxopentanoate + tRNA(Glu) + NADP(+) = L-glutamyl-tRNA(Glu) + NADPH + H(+). It participates in porphyrin-containing compound metabolism; protoporphyrin-IX biosynthesis; 5-aminolevulinate from L-glutamyl-tRNA(Glu): step 1/2. Its function is as follows. Catalyzes the NADPH-dependent reduction of glutamyl-tRNA(Glu) to glutamate 1-semialdehyde (GSA). This chain is Glutamyl-tRNA reductase, found in Neisseria meningitidis serogroup B (strain ATCC BAA-335 / MC58).